The primary structure comprises 520 residues: DDB1- and CUL4-associated factor 17 (520 aa).

2 consecutive transmembrane segments (helical) span residues 186–206 (VLLY…ILEI) and 222–242 (GILI…QTIA).

In terms of assembly, interacts with DDB1, CUL4A and CUL4B. Ubiquitously expressed.

It is found in the membrane. Its subcellular location is the nucleus. The protein localises to the nucleolus. It functions in the pathway protein modification; protein ubiquitination. May function as a substrate receptor for CUL4-DDB1 E3 ubiquitin-protein ligase complex. The sequence is that of DDB1- and CUL4-associated factor 17 (DCAF17) from Homo sapiens (Human).